The primary structure comprises 132 residues: MITIYTAPSCTSCKKAKTWLSYHHIPFNERNLIADPLSTTEISQILQKCDDGVEGLISSRNRFVKTLGVDFEDISLSQAIKIISENPQIMRRPIIMDEKRLHVGYNEEEIRAFLPRTVRVLENGGARLRSAI.

A disulfide bond links Cys10 and Cys13.

This sequence belongs to the ArsC family. Spx subfamily. Interacts with the C-terminal domain of the alpha subunit of the RNAP.

It is found in the cytoplasm. In terms of biological role, global transcriptional regulator that plays a key role in stress response and exerts either positive or negative regulation of genes. Acts by interacting with the C-terminal domain of the alpha subunit of the RNA polymerase (RNAP). This interaction can enhance binding of RNAP to the promoter region of target genes and stimulate their transcription, or block interaction of RNAP with activator. The polypeptide is Global transcriptional regulator Spx 2 (Lactococcus lactis subsp. lactis (strain IL1403) (Streptococcus lactis)).